Reading from the N-terminus, the 322-residue chain is Quinolinate synthase (322 aa).

Positions 37 and 54 each coordinate iminosuccinate. Cys-99 provides a ligand contact to [4Fe-4S] cluster. Iminosuccinate is bound by residues 125-127 (YVN) and Ser-142. A [4Fe-4S] cluster-binding site is contributed by Cys-185. Residues 211-213 (HPE) and Thr-228 each bind iminosuccinate. Cys-278 is a binding site for [4Fe-4S] cluster.

Belongs to the quinolinate synthase family. Type 2 subfamily. It depends on [4Fe-4S] cluster as a cofactor.

The protein localises to the cytoplasm. The enzyme catalyses iminosuccinate + dihydroxyacetone phosphate = quinolinate + phosphate + 2 H2O + H(+). The protein operates within cofactor biosynthesis; NAD(+) biosynthesis; quinolinate from iminoaspartate: step 1/1. In terms of biological role, catalyzes the condensation of iminoaspartate with dihydroxyacetone phosphate to form quinolinate. The polypeptide is Quinolinate synthase (Chlorobaculum tepidum (strain ATCC 49652 / DSM 12025 / NBRC 103806 / TLS) (Chlorobium tepidum)).